The chain runs to 140 residues: Large ribosomal subunit protein uL15 (140 aa).

The segment at 1-32 is disordered; it reads MDTKKFRGSRTCGGGTHKNRRGAGNRGGRGKA.

It belongs to the universal ribosomal protein uL15 family. Part of the 50S ribosomal subunit.

In terms of biological role, binds to the 23S rRNA. In Methanosarcina acetivorans (strain ATCC 35395 / DSM 2834 / JCM 12185 / C2A), this protein is Large ribosomal subunit protein uL15.